Reading from the N-terminus, the 87-residue chain is Beta-toxin Cn5 (87 aa).

An N-terminal signal peptide occupies residues 1–19 (MNSLLMITACLFLIGTVWA). The region spanning 20-85 (KEGYLVNKST…TYPLPNKSCS (66 aa)) is the LCN-type CS-alpha/beta domain. Intrachain disulfides connect cysteine 31/cysteine 84, cysteine 35/cysteine 60, cysteine 44/cysteine 65, and cysteine 48/cysteine 67.

The protein belongs to the long (4 C-C) scorpion toxin superfamily. Sodium channel inhibitor family. Beta subfamily. As to expression, expressed by the venom gland.

The protein resides in the secreted. Functionally, beta toxins bind voltage-independently at site-4 of sodium channels (Nav) and shift the voltage of activation toward more negative potentials thereby affecting sodium channel activation and promoting spontaneous and repetitive firing. This toxin is lethal to crustaceans (freshwater crayfish (Cambarellus montezumae spp.)), it provokes a reversible paralysis to insects (crickets (Achaeta spp.)), but is not toxic to mice. At high concentrations, it does displace the (beta) mammal-specific toxin Cn2 from rat brain synaptosomes. This Centruroides noxius (Mexican scorpion) protein is Beta-toxin Cn5.